Here is a 328-residue protein sequence, read N- to C-terminus: Glycerol-3-phosphate dehydrogenase [NAD(P)+] (328 aa).

Tryptophan 11, arginine 30, and lysine 103 together coordinate NADPH. Sn-glycerol 3-phosphate is bound by residues lysine 103, glycine 132, and serine 134. Alanine 136 serves as a coordination point for NADPH. Sn-glycerol 3-phosphate is bound by residues lysine 187, aspartate 240, serine 250, arginine 251, and asparagine 252. The active-site Proton acceptor is lysine 187. An NADPH-binding site is contributed by arginine 251. 2 residues coordinate NADPH: valine 275 and glutamate 277.

The protein belongs to the NAD-dependent glycerol-3-phosphate dehydrogenase family.

Its subcellular location is the cytoplasm. The catalysed reaction is sn-glycerol 3-phosphate + NAD(+) = dihydroxyacetone phosphate + NADH + H(+). It catalyses the reaction sn-glycerol 3-phosphate + NADP(+) = dihydroxyacetone phosphate + NADPH + H(+). It functions in the pathway membrane lipid metabolism; glycerophospholipid metabolism. In terms of biological role, catalyzes the reduction of the glycolytic intermediate dihydroxyacetone phosphate (DHAP) to sn-glycerol 3-phosphate (G3P), the key precursor for phospholipid synthesis. This chain is Glycerol-3-phosphate dehydrogenase [NAD(P)+], found in Aromatoleum aromaticum (strain DSM 19018 / LMG 30748 / EbN1) (Azoarcus sp. (strain EbN1)).